Consider the following 144-residue polypeptide: Large ribosomal subunit protein uL15 (144 aa).

Residues Met1–Gly53 are disordered. The span at Arg21–Gly31 shows a compositional bias: gly residues.

Belongs to the universal ribosomal protein uL15 family. Part of the 50S ribosomal subunit.

Functionally, binds to the 23S rRNA. The protein is Large ribosomal subunit protein uL15 of Proteus mirabilis (strain HI4320).